Reading from the N-terminus, the 392-residue chain is Lysine acetyltransferase (392 aa).

It carries out the reaction L-lysine + acetyl-CoA = N(6)-acetyl-L-lysine + CoA + H(+). The protein operates within amino-acid degradation; L-lysine degradation via acetylation pathway; glutarate from L-lysine: step 1/6. With respect to regulation, activity is inhibited by 5-aminovalerate. Its function is as follows. Lysine N-6-acetyl transferase (LAT) that catalyzes the first step of the lysine degradation pathway. In Yarrowia lipolytica (strain CLIB 122 / E 150) (Yeast), this protein is Lysine acetyltransferase.